Consider the following 427-residue polypeptide: Protein TIFY 6a (427 aa).

The segment covering 1–25 (MERDFLGAIWRKEEAAGKPEEHSDY) has biased composition (basic and acidic residues). Disordered regions lie at residues 1–32 (MERDFLGAIWRKEEAAGKPEEHSDYRGGGGGA) and 128–154 (YGVAAPHHFPSPSPSPRHPVPFGHANP). Positions 136 to 146 (FPSPSPSPRHP) are enriched in pro residues. The Tify domain maps to 196–231 (QNPKVTQMTIFYDGLVNVFDNIPVEKAQELMLLASR). The interval 296 to 327 (SFSSSNDSAGPKSGGLPLAVTPLSQASPSQPI) is disordered. Residues 317-327 (PLSQASPSQPI) are compositionally biased toward polar residues. The Jas signature appears at 343 to 367 (PQARKASLARFLEKRKERVSSVAPY). A Nuclear localization signal motif is present at residues 345-352 (ARKASLAR). A disordered region spans residues 361 to 427 (VSSVAPYPSS…QEPPSTKLQI (67 aa)). Polar residues-rich tracts occupy residues 369–402 (SSKSPLESSDTIGSPSTPSKSSCTDITPSTNNCE) and 411–427 (RNISFSSQEPPSTKLQI).

The protein belongs to the TIFY/JAZ family. Interacts with COI1A. Interacts with COI1A and COI1B in a coronatine-dependent manner. Coronatine is an analog of jasmonoyl isoleucine (JA-Ile). In terms of processing, ubiquitinated. Targeted for degradation by the SCF(COI1) E3 ubiquitin ligase-proteasome pathway during jasmonate signaling.

Its subcellular location is the nucleus. Repressor of jasmonate responses. The chain is Protein TIFY 6a from Oryza sativa subsp. japonica (Rice).